The primary structure comprises 385 residues: MSVALAGNPASTSTQYEPLRVMIVDDSVVIRGLISRWIEAEPDMVVAASLRTGLDAVNQVERIKPDVAVLDIEMPELDGISALPKLLAKKRDLIIIMASTLTRRNAEISFKALSLGAADYIPKPESTREASAADIFKHDLLQKIRHLGGKVRRKASAASSTAAPALMREPAAPAHSVASQAALVKRPFGVTAPRVLLIGSSTGGPQALMSLVSEIGSVIDHYPVLITQHMPPTFTTILAEHLMRSARRPAHEGVDGEVVKSGQIYLAPGGRHMRVVRQGGQAVIALDDGPPVNFCKPAVDPLFNSAIDVWQSGILAVVLTGMGSDGMRGGKDIVAAGGSVIAQDEASSVVWGMPGAAANAGICAAVLPLNQIGPKLVRLFSGDRS.

The Response regulatory domain maps to Arg-20 to His-138. The residue at position 71 (Asp-71) is a 4-aspartylphosphate. A CheB-type methylesterase domain is found at Gly-189–Asp-383. Active-site residues include Ser-201, His-229, and Asp-325.

The protein belongs to the CheB family. Phosphorylated by CheA. Phosphorylation of the N-terminal regulatory domain activates the methylesterase activity.

The protein localises to the cytoplasm. It carries out the reaction [protein]-L-glutamate 5-O-methyl ester + H2O = L-glutamyl-[protein] + methanol + H(+). The enzyme catalyses L-glutaminyl-[protein] + H2O = L-glutamyl-[protein] + NH4(+). Functionally, involved in chemotaxis. Part of a chemotaxis signal transduction system that modulates chemotaxis in response to various stimuli. Catalyzes the demethylation of specific methylglutamate residues introduced into the chemoreceptors (methyl-accepting chemotaxis proteins or MCP) by CheR. Also mediates the irreversible deamidation of specific glutamine residues to glutamic acid. The polypeptide is Protein-glutamate methylesterase/protein-glutamine glutaminase (Rhodopseudomonas palustris (strain BisB5)).